The primary structure comprises 117 residues: Large ribosomal subunit protein bL19 (117 aa).

Belongs to the bacterial ribosomal protein bL19 family.

Functionally, this protein is located at the 30S-50S ribosomal subunit interface and may play a role in the structure and function of the aminoacyl-tRNA binding site. In Alkaliphilus metalliredigens (strain QYMF), this protein is Large ribosomal subunit protein bL19.